A 425-amino-acid chain; its full sequence is Malate transporter MleP (425 aa).

11 helical membrane-spanning segments follow: residues 11 to 31 (GISLPLYAFFVAVIIVVTLLG), 35 to 55 (LDMVGLTLLLVTLGHLLYFIG), 65 to 85 (LGGGSVFTLIGATLLSFFHIV), 96 to 116 (FMGGKFGFLDFYIAALICGSI), 134 to 154 (IALITMVIGFFSVGLVGMLIG), 196 to 216 (IFSQLAPAVTFGNILAIIGAL), 246 to 266 (IKLDAQQIGTGMLFAFALLMA), 269 to 289 (ILNKFFPNIHQYAFMIIIVFI), 310 to 330 (VIMTNLTHAVLAGIGLALIDL), 339 to 359 (WQFVVLCLTSVVVMGLASWFL), and 401 to 421 (FAQMANRLCGAIVLIFGGILI).

Belongs to the 2-hydroxycarboxylate transporter (2-HCT) (TC 2.A.24) family.

The protein resides in the cell membrane. The catalysed reaction is (S)-lactate(in) + (S)-malate(out) = (S)-lactate(out) + (S)-malate(in). The enzyme catalyses (R)-lactate(in) + (S)-malate(out) = (R)-lactate(out) + (S)-malate(in). It catalyses the reaction glycolate(in) + (S)-malate(out) = glycolate(out) + (S)-malate(in). Functionally, secondary transporter involved in malolactic fermentation. Catalyzes the uptake of divalent malate into the cell coupled to the exit of monovalent lactate, a product of malate degradation (precursor/product exchange). The malate/lactate exchange is electrogenic and results in the generation of a membrane potential. Is highly selective for the S-enantiomer of malate. In the absence of lactate, MleP can also catalyze the proton-dependent transport of malate. In vitro, transports a range of substrates that contain the 2-hydroxycarboxylate motif, HO-CR(2)-COO(-), with a preference for malate, lactate and glycolate. Modification of the OH or the COO(-) groups of the 2-hydroxycarboxylate motif drastically reduces the affinity of the transporter for the substrates, indicating their relevance in substrate recognition. Significant activity is also observed with some 2-oxocarboxylates. Transports only poorly citromalate. Citrate binds to MleP but is not translocated. This chain is Malate transporter MleP, found in Lactococcus lactis subsp. lactis (strain IL1403) (Streptococcus lactis).